The following is a 543-amino-acid chain: Cytochrome P450 1B1 (543 aa).

Heme is bound at residue Cys-470.

The protein belongs to the cytochrome P450 family. The cofactor is heme.

It localises to the endoplasmic reticulum membrane. Its subcellular location is the microsome membrane. The protein localises to the mitochondrion. The enzyme catalyses an organic molecule + reduced [NADPH--hemoprotein reductase] + O2 = an alcohol + oxidized [NADPH--hemoprotein reductase] + H2O + H(+). It catalyses the reaction 17beta-estradiol + reduced [NADPH--hemoprotein reductase] + O2 = 2-hydroxy-17beta-estradiol + oxidized [NADPH--hemoprotein reductase] + H2O + H(+). The catalysed reaction is 17beta-estradiol + reduced [NADPH--hemoprotein reductase] + O2 = 4-hydroxy-17beta-estradiol + oxidized [NADPH--hemoprotein reductase] + H2O + H(+). It carries out the reaction estrone + reduced [NADPH--hemoprotein reductase] + O2 = 2-hydroxyestrone + oxidized [NADPH--hemoprotein reductase] + H2O + H(+). The enzyme catalyses estrone + reduced [NADPH--hemoprotein reductase] + O2 = 4-hydroxyestrone + oxidized [NADPH--hemoprotein reductase] + H2O + H(+). It catalyses the reaction testosterone + reduced [NADPH--hemoprotein reductase] + O2 = 6beta,17beta-dihydroxyandrost-4-en-3-one + oxidized [NADPH--hemoprotein reductase] + H2O + H(+). The catalysed reaction is progesterone + reduced [NADPH--hemoprotein reductase] + O2 = 6beta-hydroxyprogesterone + oxidized [NADPH--hemoprotein reductase] + H2O + H(+). It carries out the reaction progesterone + reduced [NADPH--hemoprotein reductase] + O2 = 16alpha-hydroxyprogesterone + oxidized [NADPH--hemoprotein reductase] + H2O + H(+). The enzyme catalyses all-trans-retinol + reduced [NADPH--hemoprotein reductase] + O2 = all-trans-retinal + oxidized [NADPH--hemoprotein reductase] + 2 H2O + H(+). It catalyses the reaction all-trans-retinal + reduced [NADPH--hemoprotein reductase] + O2 = all-trans-retinoate + oxidized [NADPH--hemoprotein reductase] + H2O + 2 H(+). The catalysed reaction is (5Z,8Z,11Z,14Z)-eicosatetraenoate + reduced [NADPH--hemoprotein reductase] + O2 = (8R,9S)-epoxy-(5Z,11Z,14Z)-eicosatrienoate + oxidized [NADPH--hemoprotein reductase] + H2O + H(+). It carries out the reaction (5Z,8Z,11Z,14Z)-eicosatetraenoate + reduced [NADPH--hemoprotein reductase] + O2 = (11R,12S)-epoxy-(5Z,8Z,14Z)-eicosatrienoate + oxidized [NADPH--hemoprotein reductase] + H2O + H(+). The enzyme catalyses (5Z,8Z,11Z,14Z)-eicosatetraenoate + reduced [NADPH--hemoprotein reductase] + O2 = (11S,12R)-epoxy-(5Z,8Z,14Z)-eicosatrienoate + oxidized [NADPH--hemoprotein reductase] + H2O + H(+). It catalyses the reaction (5Z,8Z,11Z,14Z)-eicosatetraenoate + reduced [NADPH--hemoprotein reductase] + O2 = (14S,15R)-epoxy-(5Z,8Z,11Z)-eicosatrienoate + oxidized [NADPH--hemoprotein reductase] + H2O + H(+). The catalysed reaction is (5Z,8Z,11Z,14Z)-eicosatetraenoate + reduced [NADPH--hemoprotein reductase] + O2 = (14R,15S)-epoxy-(5Z,8Z,11Z)-eicosatrienoate + oxidized [NADPH--hemoprotein reductase] + H2O + H(+). It carries out the reaction (5S)-hydroperoxy-(6E,8Z,11Z,14Z)-eicosatetraenoate = 5-oxo-(6E,8Z,11Z,14Z)-eicosatetraenoate + H2O. The enzyme catalyses (12S)-hydroperoxy-(5Z,8Z,10E,14Z)-eicosatetraenoate = 12-oxo-(5Z,8Z,10E,14Z)-eicosatetraenoate + H2O. It catalyses the reaction (15S)-hydroperoxy-(5Z,8Z,11Z,13E)-eicosatetraenoate = 15-oxo-(5Z,8Z,11Z,13E)-eicosatetraenoate + H2O. The catalysed reaction is (13S)-hydroperoxy-(9Z,11E)-octadecadienoate = 13-oxo-(9Z,11E)-octadecadienoate + H2O. The protein operates within steroid hormone biosynthesis. It participates in cofactor metabolism; retinol metabolism. It functions in the pathway lipid metabolism; arachidonate metabolism. With respect to regulation, enzyme activity is increased by cytochrome b5. Enzyme activity is increased by liposomes containing anionic phospholipids, phosphatidic acid and cardiolipin. Inhibited by naringenin with an IC(50) of 5 uM. In terms of biological role, a cytochrome P450 monooxygenase involved in the metabolism of various endogenous substrates, including fatty acids, steroid hormones and vitamins. Mechanistically, uses molecular oxygen inserting one oxygen atom into a substrate, and reducing the second into a water molecule, with two electrons provided by NADPH via cytochrome P450 reductase (NADPH--hemoprotein reductase). Exhibits catalytic activity for the formation of hydroxyestrogens from 17beta-estradiol (E2), namely 2- and 4-hydroxy E2. Metabolizes testosterone and progesterone to B or D ring hydroxylated metabolites. May act as a major enzyme for all-trans retinoic acid biosynthesis in extrahepatic tissues. Catalyzes two successive oxidative transformation of all-trans retinol to all-trans retinal and then to the active form all-trans retinoic acid. Catalyzes the epoxidation of double bonds of certain PUFA. Converts arachidonic acid toward epoxyeicosatrienoic acid (EpETrE) regioisomers, 8,9-, 11,12-, and 14,15- EpETrE, that function as lipid mediators in the vascular system. Additionally, displays dehydratase activity toward oxygenated eicosanoids including hydroperoxyeicosatetraenoates (HpETEs). This activity is independent of cytochrome P450 reductase, NADPH, and O2. Also involved in the oxidative metabolism of xenobiotics, particularly converting polycyclic aromatic hydrocarbons and heterocyclic aryl amines procarcinogens to DNA-damaging products. Plays an important role in retinal vascular development. Under ambient/hyperoxic O2 conditions, promotes angiogenesis and capillary morphogenesis of retinal endothelial cells and pericytes, likely by metabolizing the oxygenated products symptomatic of oxidative stress. Also, contributes to oxidative homeostasis and ultrastructural organization and function of trabecular meshwork tissue through modulation of POSTN expression. In Rattus norvegicus (Rat), this protein is Cytochrome P450 1B1.